The primary structure comprises 75 residues: Small ribosomal subunit protein bS21A (75 aa).

It belongs to the bacterial ribosomal protein bS21 family.

The chain is Small ribosomal subunit protein bS21A (rpsU1) from Agrobacterium fabrum (strain C58 / ATCC 33970) (Agrobacterium tumefaciens (strain C58)).